The following is a 574-amino-acid chain: MSLLDLVLLLLVLGLGGVLLLRRKGEDRSAQEARELLEAARREAREVLEAARKEARDILEAARHEAKALRQEAEARAKAQREEVEAELRRRLEAAEAEAKKRLEEAGERLKAEREELRAERERLRSLQEELKEERERLKAEREELRREGERLAKRAEALDARAARLEEAEAELVRKEEALKAEARALEERFKEVERRLYEVAGLTPEEARRLVLERLDRELEEEKAQRVRAALERARLEARREAQKILAQAMQRQASETAAQLAVTVVPIPSDAMKGRIIGREGRNIRAFEALTGVDLIIDDTPDAVLLSSFNPIRREIARMALEELLKDGRIHPSRIEEVVEKAKQEMKTFIYERGEEAALEAGVVGLKPGLIQLLGRLHFRSSYGQNVLKHSIQVAHLAGIMAAELGLDAALARRAGLLHDIGKSVDREVEGSHVEIGIALARRFGEPMEVVDAIAHHHDPDNAETLYAVLVAAADALSAARPGARRESLEEYLQRLEALERIALSFPGVETAFAVQAGREVRVIVKPEKISDAKATLLAREIASRIEKEMNYPGQVQVTVVRETRAVEYAR.

The helical transmembrane segment at 1-21 (MSLLDLVLLLLVLGLGGVLLL) threads the bilayer. One can recognise a KH domain in the interval 264 to 327 (AVTVVPIPSD…EIARMALEEL (64 aa)). Residues 390–483 (VLKHSIQVAH…VAAADALSAA (94 aa)) enclose the HD domain.

This sequence belongs to the RNase Y family.

It localises to the cell membrane. Its function is as follows. Endoribonuclease that initiates mRNA decay. The polypeptide is Ribonuclease Y (Thermus thermophilus (strain ATCC BAA-163 / DSM 7039 / HB27)).